Consider the following 460-residue polypeptide: Ribulose bisphosphate carboxylase (460 aa).

Asn-112 contacts substrate. The Proton acceptor role is filled by Lys-167. Lys-169 provides a ligand contact to substrate. Lys-192, Asp-194, and Glu-195 together coordinate Mg(2+). Lys-192 carries the post-translational modification N6-carboxylysine. His-288 serves as the catalytic Proton acceptor. Substrate-binding residues include Arg-289, His-322, and Ser-369.

Belongs to the RuBisCO large chain family. Type II subfamily. Homodimer. Mg(2+) is required as a cofactor.

It carries out the reaction 2 (2R)-3-phosphoglycerate + 2 H(+) = D-ribulose 1,5-bisphosphate + CO2 + H2O. The catalysed reaction is D-ribulose 1,5-bisphosphate + O2 = 2-phosphoglycolate + (2R)-3-phosphoglycerate + 2 H(+). Functionally, ruBisCO catalyzes two reactions: the carboxylation of D-ribulose 1,5-bisphosphate, the primary event in carbon dioxide fixation, as well as the oxidative fragmentation of the pentose substrate. Both reactions occur simultaneously and in competition at the same active site. This Rhodopseudomonas palustris (strain BisA53) protein is Ribulose bisphosphate carboxylase.